A 186-amino-acid chain; its full sequence is Interferon beta (186 aa).

An N-terminal signal peptide occupies residues 1–21; it reads MTYRWILPMALLLCFSTTALS. Phosphotyrosine is present on Tyr-24. A disulfide bridge connects residues Cys-52 and Cys-161. N-linked (GlcNAc...) asparagine glycans are attached at residues Asn-101 and Asn-136.

Belongs to the alpha/beta interferon family. Monomer.

The protein localises to the secreted. In terms of biological role, type I interferon cytokine that plays a key role in the innate immune response to infection, developing tumors and other inflammatory stimuli. Signals via binding to high-affinity (IFNAR2) and low-affinity (IFNAR1) heterodimeric receptor, activating the canonical Jak-STAT signaling pathway resulting in transcriptional activation or repression of interferon-regulated genes that encode the effectors of the interferon response, such as antiviral proteins, regulators of cell proliferation and differentiation, and immunoregulatory proteins. Signals mostly via binding to a IFNAR1-IFNAR2 heterodimeric receptor, but can also function with IFNAR1 alone and independently of Jak-STAT pathways. Elicits a wide variety of responses, including antiviral and antibacterial activities, and can regulate the development of B-cells, myelopoiesis and lipopolysaccharide (LPS)-inducible production of tumor necrosis factor. Plays a role in neuronal homeostasis by regulating dopamine turnover and protecting dopaminergic neurons: acts by promoting neuronal autophagy and alpha-synuclein clearance, thereby preventing dopaminergic neuron loss. IFNB1 is more potent than interferon-alpha (IFN-alpha) in inducing the apoptotic and antiproliferative pathways required for control of tumor cell growth. The chain is Interferon beta (IFNB1) from Equus caballus (Horse).